A 476-amino-acid polypeptide reads, in one-letter code: Glycogen synthase (476 aa).

Lys15 provides a ligand contact to ADP-alpha-D-glucose.

Belongs to the glycosyltransferase 1 family. Bacterial/plant glycogen synthase subfamily.

The catalysed reaction is [(1-&gt;4)-alpha-D-glucosyl](n) + ADP-alpha-D-glucose = [(1-&gt;4)-alpha-D-glucosyl](n+1) + ADP + H(+). It participates in glycan biosynthesis; glycogen biosynthesis. In terms of biological role, synthesizes alpha-1,4-glucan chains using ADP-glucose. This Yersinia pseudotuberculosis serotype O:1b (strain IP 31758) protein is Glycogen synthase.